A 652-amino-acid chain; its full sequence is Phosphomethylpyrimidine synthase (652 aa).

Substrate-binding positions include Asn-257, Met-286, Tyr-315, His-351, 371–373 (SRG), 412–415 (DGLR), and Glu-451. Zn(2+) is bound at residue His-455. Tyr-478 lines the substrate pocket. His-519 serves as a coordination point for Zn(2+). [4Fe-4S] cluster is bound by residues Cys-599, Cys-602, and Cys-607.

This sequence belongs to the ThiC family. In terms of assembly, homodimer. [4Fe-4S] cluster serves as cofactor.

The enzyme catalyses 5-amino-1-(5-phospho-beta-D-ribosyl)imidazole + S-adenosyl-L-methionine = 4-amino-2-methyl-5-(phosphooxymethyl)pyrimidine + CO + 5'-deoxyadenosine + formate + L-methionine + 3 H(+). Its pathway is cofactor biosynthesis; thiamine diphosphate biosynthesis. Catalyzes the synthesis of the hydroxymethylpyrimidine phosphate (HMP-P) moiety of thiamine from aminoimidazole ribotide (AIR) in a radical S-adenosyl-L-methionine (SAM)-dependent reaction. This is Phosphomethylpyrimidine synthase from Thiobacillus denitrificans (strain ATCC 25259 / T1).